A 316-amino-acid chain; its full sequence is Pantothenate kinase (316 aa).

95–102 (GSVAVGKS) lines the ATP pocket.

This sequence belongs to the prokaryotic pantothenate kinase family.

The protein resides in the cytoplasm. The catalysed reaction is (R)-pantothenate + ATP = (R)-4'-phosphopantothenate + ADP + H(+). It functions in the pathway cofactor biosynthesis; coenzyme A biosynthesis; CoA from (R)-pantothenate: step 1/5. This Hamiltonella defensa subsp. Acyrthosiphon pisum (strain 5AT) protein is Pantothenate kinase.